We begin with the raw amino-acid sequence, 385 residues long: S-adenosylmethionine synthase (385 aa).

His-16 is a binding site for ATP. Asp-18 is a binding site for Mg(2+). Glu-44 is a K(+) binding site. Residues Glu-57 and Gln-100 each coordinate L-methionine. Residues 100–110 (QSPDINQGVDR) form a flexible loop region. ATP-binding positions include 164–166 (DGK), 230–231 (KF), Asp-239, 245–246 (RK), Ala-262, and Lys-266. Asp-239 contributes to the L-methionine binding site. Lys-270 is a binding site for L-methionine.

This sequence belongs to the AdoMet synthase family. In terms of assembly, homotetramer; dimer of dimers. Mg(2+) is required as a cofactor. It depends on K(+) as a cofactor.

Its subcellular location is the cytoplasm. It carries out the reaction L-methionine + ATP + H2O = S-adenosyl-L-methionine + phosphate + diphosphate. The protein operates within amino-acid biosynthesis; S-adenosyl-L-methionine biosynthesis; S-adenosyl-L-methionine from L-methionine: step 1/1. Functionally, catalyzes the formation of S-adenosylmethionine (AdoMet) from methionine and ATP. The overall synthetic reaction is composed of two sequential steps, AdoMet formation and the subsequent tripolyphosphate hydrolysis which occurs prior to release of AdoMet from the enzyme. The polypeptide is S-adenosylmethionine synthase (Helicobacter pylori (strain P12)).